We begin with the raw amino-acid sequence, 56 residues long: UPF0391 membrane protein Noc_0482 (56 aa).

A run of 2 helical transmembrane segments spans residues 1-21 (MFGW…FGFT) and 29-49 (HIAW…LLLG).

This sequence belongs to the UPF0391 family.

It is found in the cell membrane. In Nitrosococcus oceani (strain ATCC 19707 / BCRC 17464 / JCM 30415 / NCIMB 11848 / C-107), this protein is UPF0391 membrane protein Noc_0482.